We begin with the raw amino-acid sequence, 530 residues long: UDP-glucuronosyltransferase 2B17 (530 aa).

The signal sequence occupies residues 1-23; it reads MPGKWISALLLLQISCCFRSVKC. N-linked (GlcNAc...) asparagine glycosylation is found at asparagine 316 and asparagine 483. Residues 494–510 traverse the membrane as a helical segment; sequence VIGFLLSCVATTIVLSV.

This sequence belongs to the UDP-glycosyltransferase family.

It localises to the endoplasmic reticulum membrane. It catalyses the reaction glucuronate acceptor + UDP-alpha-D-glucuronate = acceptor beta-D-glucuronoside + UDP + H(+). The enzyme catalyses 17alpha-estradiol + UDP-alpha-D-glucuronate = 17alpha-estradiol 3-O-(beta-D-glucuronate) + UDP + H(+). It carries out the reaction 17alpha-estradiol + UDP-alpha-D-glucuronate = 17alpha-estradiol 17-O-(beta-D-glucuronate) + UDP + H(+). The catalysed reaction is 17beta-estradiol + UDP-alpha-D-glucuronate = 17beta-estradiol 17-O-(beta-D-glucuronate) + UDP + H(+). It catalyses the reaction 17beta-hydroxy-5alpha-androstan-3-one + UDP-alpha-D-glucuronate = 5alpha-dihydrotestosterone 17-O-(beta-D-glucuronate) + UDP + H(+). The enzyme catalyses testosterone + UDP-alpha-D-glucuronate = testosterone 17-O-(beta-D-glucuronate) + UDP + H(+). In terms of biological role, UDP-glucuronosyltransferase (UGT) that catalyzes phase II biotransformation reactions in which lipophilic substrates are conjugated with glucuronic acid to increase the metabolite's water solubility, thereby facilitating excretion into either the urine or bile. Catalyzes the glucuronidation of endogenous steroid hormones such as androgens (epitestosterone, androsterone) and estrogens (estradiol, epiestradiol). The chain is UDP-glucuronosyltransferase 2B17 from Mus musculus (Mouse).